We begin with the raw amino-acid sequence, 216 residues long: MNENTFEKTKIKICGIRDLEIAKICREEGADYIGLNFVPSSPRKISLKDAQKIVEFYRDTKNSPEIVLLFYQNSPEEIRTVTSSLYHDLIQWVWDDPKLTFVDRKNFLGKRQICSYRVNSPIYNEDLKNIPSELLILDSYSKDAGGGTGETFNWNFISRIERKFLLAGGLNSSNVSNAIRTVKPYGVDVASGVESSPGIKDSQKVIQFIRNVRLGL.

This sequence belongs to the TrpF family.

The enzyme catalyses N-(5-phospho-beta-D-ribosyl)anthranilate = 1-(2-carboxyphenylamino)-1-deoxy-D-ribulose 5-phosphate. The protein operates within amino-acid biosynthesis; L-tryptophan biosynthesis; L-tryptophan from chorismate: step 3/5. The polypeptide is N-(5'-phosphoribosyl)anthranilate isomerase (Leptospira borgpetersenii serovar Hardjo-bovis (strain JB197)).